We begin with the raw amino-acid sequence, 450 residues long: Cysteine protease ATG4C (450 aa).

Residue Cys112 is the Nucleophile of the active site. Active-site residues include Asp336 and His338.

This sequence belongs to the peptidase C54 family.

Its subcellular location is the cytoplasm. It catalyses the reaction [protein]-C-terminal L-amino acid-glycyl-phosphatidylethanolamide + H2O = [protein]-C-terminal L-amino acid-glycine + a 1,2-diacyl-sn-glycero-3-phosphoethanolamine. In terms of biological role, cysteine protease that plays a key role in autophagy by mediating both proteolytic activation and delipidation of ATG8 family proteins. The protease activity is required for proteolytic activation of ATG8 family proteins: cleaves the C-terminal amino acid of ATG8 proteins to reveal a C-terminal glycine. Exposure of the glycine at the C-terminus is essential for ATG8 proteins conjugation to phosphatidylethanolamine (PE) and insertion to membranes, which is necessary for autophagy. In addition to the protease activity, also mediates delipidation of ATG8 family proteins. Catalyzes delipidation of PE-conjugated forms of ATG8 proteins during macroautophagy. The sequence is that of Cysteine protease ATG4C from Xenopus tropicalis (Western clawed frog).